Reading from the N-terminus, the 356-residue chain is Glycerol-1-phosphate dehydrogenase [NAD(P)+] (356 aa).

Residues 103–107 and 125–128 each bind NAD(+); these read GRSID and TAAS. D130 serves as a coordination point for substrate. S134 contributes to the NAD(+) binding site. Residue D177 coordinates substrate. The Zn(2+) site is built by D177 and H257. H261 is a substrate binding site. H273 is a binding site for Zn(2+).

Belongs to the glycerol-1-phosphate dehydrogenase family. Zn(2+) is required as a cofactor.

The protein resides in the cytoplasm. It carries out the reaction sn-glycerol 1-phosphate + NAD(+) = dihydroxyacetone phosphate + NADH + H(+). The enzyme catalyses sn-glycerol 1-phosphate + NADP(+) = dihydroxyacetone phosphate + NADPH + H(+). It participates in membrane lipid metabolism; glycerophospholipid metabolism. Its function is as follows. Catalyzes the NAD(P)H-dependent reduction of dihydroxyacetonephosphate (DHAP or glycerone phosphate) to glycerol 1-phosphate (G1P). The G1P thus generated is used as the glycerophosphate backbone of phospholipids in the cellular membranes of Archaea. In Methanosarcina acetivorans (strain ATCC 35395 / DSM 2834 / JCM 12185 / C2A), this protein is Glycerol-1-phosphate dehydrogenase [NAD(P)+].